A 115-amino-acid chain; its full sequence is Protein E6A (115 aa).

A signal peptide spans 1–25; the sequence is MTDKFYFYGLFWGILLFVFLQHMQG.

The protein is Protein E6A (12) of Equine herpesvirus 2 (strain 86/87) (EHV-2).